The primary structure comprises 74 residues: ATP synthase subunit c (74 aa).

The next 2 membrane-spanning stretches (helical) occupy residues 8–28 (FIGV…VSNI) and 52–72 (IGAG…MLLI).

It belongs to the ATPase C chain family. In terms of assembly, F-type ATPases have 2 components, F(1) - the catalytic core - and F(0) - the membrane proton channel. F(1) has five subunits: alpha(3), beta(3), gamma(1), delta(1), epsilon(1). F(0) has three main subunits: a(1), b(2) and c(10-14). The alpha and beta chains form an alternating ring which encloses part of the gamma chain. F(1) is attached to F(0) by a central stalk formed by the gamma and epsilon chains, while a peripheral stalk is formed by the delta and b chains.

It is found in the cell inner membrane. In terms of biological role, f(1)F(0) ATP synthase produces ATP from ADP in the presence of a proton or sodium gradient. F-type ATPases consist of two structural domains, F(1) containing the extramembraneous catalytic core and F(0) containing the membrane proton channel, linked together by a central stalk and a peripheral stalk. During catalysis, ATP synthesis in the catalytic domain of F(1) is coupled via a rotary mechanism of the central stalk subunits to proton translocation. Key component of the F(0) channel; it plays a direct role in translocation across the membrane. A homomeric c-ring of between 10-14 subunits forms the central stalk rotor element with the F(1) delta and epsilon subunits. In Rickettsia canadensis (strain McKiel), this protein is ATP synthase subunit c.